The primary structure comprises 249 residues: Ribosomal RNA small subunit methyltransferase J (249 aa).

S-adenosyl-L-methionine is bound by residues 97-98 (RD), 113-114 (ER), and Asp-167.

This sequence belongs to the methyltransferase superfamily. RsmJ family.

The protein localises to the cytoplasm. The enzyme catalyses guanosine(1516) in 16S rRNA + S-adenosyl-L-methionine = N(2)-methylguanosine(1516) in 16S rRNA + S-adenosyl-L-homocysteine + H(+). Specifically methylates the guanosine in position 1516 of 16S rRNA. The protein is Ribosomal RNA small subunit methyltransferase J of Aeromonas salmonicida (strain A449).